We begin with the raw amino-acid sequence, 79 residues long: Small ribosomal subunit protein uS17 (79 aa).

This sequence belongs to the universal ribosomal protein uS17 family. In terms of assembly, part of the 30S ribosomal subunit.

Its function is as follows. One of the primary rRNA binding proteins, it binds specifically to the 5'-end of 16S ribosomal RNA. This is Small ribosomal subunit protein uS17 from Orientia tsutsugamushi (strain Boryong) (Rickettsia tsutsugamushi).